The primary structure comprises 1668 residues: Probable histone acetyltransferase HAC-like 1 (1668 aa).

3 disordered regions span residues 1 to 34, 459 to 493, and 528 to 551; these read MNVG…ADGL, QQQP…SEQG, and KGGQ…HDSQ. The span at 11–23 shows a compositional bias: polar residues; that stretch reads GQMSGQAPQTNQV. Residues 459–469 are compositionally biased toward low complexity; the sequence is QQQPNSQHQQS. 2 stretches are compositionally biased toward polar residues: residues 470–491 and 536–551; these read ILRS…QLSE and LSSS…HDSQ. The segment at 651–732 adopts a TAZ-type 1 zinc-finger fold; it reads AAGNIYYFRQ…DLQCPVCSNA (82 aa). The span at 886–899 shows a compositional bias: basic and acidic residues; that stretch reads KETSETAPEVKNEA. The disordered stretch occupies residues 886–912; sequence KETSETAPEVKNEANDSTDITVSKSGK. Residues 900-909 are compositionally biased toward polar residues; it reads NDSTDITVSK. The PHD-type zinc finger occupies 1002 to 1079; it reads HFFCIPCYNE…EYTCPNCYVE (78 aa). One can recognise a CBP/p300-type HAT domain in the interval 1094 to 1530; the sequence is VLGAKDLPRT…VLYHLHNPTA (437 aa). Residues 1217-1219, 1236-1237, and tryptophan 1292 each bind acetyl-CoA; these read LDS and RT. Positions 1342–1365 form a coiled coil; it reads GAAEDMINQLRQEEDDRKQQKKGK. The ZZ-type zinc-finger motif lies at 1412–1475; that stretch reads HLQYSCSHCC…TLHPVDIVGL (64 aa). The Zn(2+) site is built by cysteine 1417, cysteine 1420, cysteine 1432, cysteine 1435, cysteine 1441, cysteine 1444, histidine 1457, and histidine 1465. The TAZ-type 2 zinc-finger motif lies at 1553–1634; that stretch reads EVCPDFDLRK…GCNVPRCRDL (82 aa). Positions 1630-1650 form a coiled coil; sequence RCRDLKEHLRRLQQQSDSRRR.

Its subcellular location is the nucleus. The catalysed reaction is L-lysyl-[protein] + acetyl-CoA = N(6)-acetyl-L-lysyl-[protein] + CoA + H(+). Acetyltransferase enzyme. Acetylates histones, giving a specific tag for transcriptional activation. This chain is Probable histone acetyltransferase HAC-like 1, found in Oryza sativa subsp. japonica (Rice).